We begin with the raw amino-acid sequence, 1026 residues long: Multidrug resistance protein MdtC (1026 aa).

11 helical membrane-spanning segments follow: residues 15-35, 333-353, 360-380, 387-407, 431-451, 463-483, 528-548, 853-873, 897-917, 953-973, and 984-1004; these read ILIA…LPVA, EVEE…FLFL, LIPA…MYLC, LSLM…IVVL, VGFT…PLLL, FAVT…TLTP, LVGV…IAIP, LILI…LYES, LFNA…IGIV, PIMM…LSGG, and ITIV…TPVV.

The protein belongs to the resistance-nodulation-cell division (RND) (TC 2.A.6) family. MdtC subfamily. In terms of assembly, part of a tripartite efflux system composed of MdtA, MdtB and MdtC. MdtC forms a heteromultimer with MdtB.

Its subcellular location is the cell inner membrane. This Salmonella choleraesuis (strain SC-B67) protein is Multidrug resistance protein MdtC.